The primary structure comprises 307 residues: HTH-type transcriptional regulator DmlR (307 aa).

Positions 5–62 constitute an HTH lysR-type domain; the sequence is PLLNDLRVFMLVARRAGFAAVAEELGVSPAFVSKRIALLEQTLNVVLLHRTTRRVTIT. The segment at residues 22 to 41 is a DNA-binding region (H-T-H motif); that stretch reads FAAVAEELGVSPAFVSKRIA.

The protein belongs to the LysR transcriptional regulatory family.

Its function is as follows. Transcriptional regulator required for the aerobic growth on D-malate as the sole carbon source. Induces the expression of dmlA in response to D-malate or L- or meso-tartrate. Negatively regulates its own expression. The protein is HTH-type transcriptional regulator DmlR (dmlR) of Escherichia coli (strain K12).